The sequence spans 363 residues: Flagellar P-ring protein (363 aa).

The signal sequence occupies residues 1 to 20 (MKLKLILAVAMLAFSLPSQA).

Belongs to the FlgI family. In terms of assembly, the basal body constitutes a major portion of the flagellar organelle and consists of four rings (L,P,S, and M) mounted on a central rod.

It is found in the periplasm. Its subcellular location is the bacterial flagellum basal body. Assembles around the rod to form the L-ring and probably protects the motor/basal body from shearing forces during rotation. This Shewanella sp. (strain MR-4) protein is Flagellar P-ring protein.